Here is a 321-residue protein sequence, read N- to C-terminus: Cytochrome f (321 aa).

Positions 1–38 (MKKNFYTISKTMSRSLKLILFSVFIGFSIFLIPQPTWA) are cleaved as a signal peptide. The heme site is built by Tyr-39, Cys-59, Cys-62, and His-63. The helical transmembrane segment at 288 to 308 (VIGMIIFFIGVGLSQIMLVLK) threads the bilayer.

Belongs to the cytochrome f family. The 4 large subunits of the cytochrome b6-f complex are cytochrome b6, subunit IV (17 kDa polypeptide, PetD), cytochrome f and the Rieske protein, while the 4 small subunits are PetG, PetL, PetM and PetN. The complex functions as a dimer. Heme serves as cofactor.

Its subcellular location is the cellular thylakoid membrane. Functionally, component of the cytochrome b6-f complex, which mediates electron transfer between photosystem II (PSII) and photosystem I (PSI), cyclic electron flow around PSI, and state transitions. The chain is Cytochrome f from Prochlorococcus marinus (strain NATL2A).